A 312-amino-acid polypeptide reads, in one-letter code: 6-hydroxy-3-succinoylpyridine 3-monooxygenase HspA (312 aa).

The NYN domain occupies 14–210; it reads IYIDGYNFYY…RSANTDLIKF (197 aa).

It carries out the reaction 4-(6-hydroxypyridin-3-yl)-4-oxobutanoate + 2 NADH + O2 + 2 H(+) = 2,5-dihydroxypyridine + succinate semialdehyde + 2 NAD(+) + H2O. It functions in the pathway alkaloid degradation; nicotine degradation. In terms of biological role, involved in the nicotine degradation. Catalyzes the cleavage of 6-hydroxy-3-succinoylpyridine (HSP) by incorporation of oxygen at the 3-position to produce to 2,5-dihydroxypyridine (DHP) and succinic semialdehyde. The polypeptide is 6-hydroxy-3-succinoylpyridine 3-monooxygenase HspA (Pseudomonas putida (strain DSM 28022 / S16)).